The chain runs to 873 residues: Programmed cell death 6-interacting protein (873 aa).

At Ala2 the chain carries N-acetylalanine. Residues 3–397 form the BRO1 domain; it reads SFIWVQLKKT…AQMREATTLA (395 aa). Positions 176–508 are interaction with CHMP4A, CHMP4B and CHMP4C; that stretch reads TVDISPDTVG…KFRAVLDKAV (333 aa). An N6-acetyllysine modification is found at Lys215. The interaction with SDCBP stretch occupies residues 423–873; it reads LTKSTAVVEQ…PPQQSYYPQQ (451 aa). Thr484 is subject to Phosphothreonine. Ser486 carries the post-translational modification Phosphoserine. A self-association region spans residues 508–873; that stretch reads VQADGQVKER…PPQQSYYPQQ (366 aa). 2 disordered regions span residues 719-808 and 837-873; these read AREP…GPPY and PYPP…YPQQ. The interaction with TSG101 stretch occupies residues 722-725; sequence PSAP. A Phosphoserine modification is found at Ser735. A phosphothreonine mark is found at Thr742 and Thr745. The segment covering 745-767 has biased composition (pro residues); that stretch reads TPAPRTMPPAKPQPPARPPPPVL. Omega-N-methylarginine is present on Arg749. The span at 768–791 shows a compositional bias: low complexity; sequence PANRVPPAAAATAPAGVGTASAAP. Composition is skewed to pro residues over residues 792–808 and 849–865; these read PQTP…GPPY and APYP…PQPP. The interaction with CEP55 stretch occupies residues 802 to 811; it reads QAQGPPYPTY.

As to quaternary structure, self-associates. Interacts with SH3KBP1. Interacts with PDCD6 in a calcium-dependent manner. Interacts with TSG101 in a calcium-dependent manner; PDCD6IP homooligomerization may be required for TSG101-binding. Interacts with SGSM3. Directly interacts with CHMP4A, CHMP4B and CHMP4C. Directly interacts with CEP55 in a 1:2 stoechiometry; this interaction is required for PDCD6IP targeting to the midbody. May interact with PDGFRB. Interacts with SH3GL1 and SH3GL2/endophilin-1. Forms a complex with SDCBP and SDC2. Found in a complex with F-actin, TJP1/ZO-1 and PARD3. Interacts with CD2AP. Interacts with ARRDC1. Interacts (via BRO1 domain) with the ATG12-ATG3 conjugate; this interaction is bridged by ATG12 and promotes multiple PDCD6IP-mediated functions such as endolysosomal trafficking, macroautophagy and exosome biogenesis. May be phosphorylated on tyrosine residues by activated PDGFRB. As to expression, expressed in astrocytes and glioma cells.

It localises to the cytoplasm. Its subcellular location is the cytosol. The protein localises to the melanosome. It is found in the cytoskeleton. The protein resides in the microtubule organizing center. It localises to the centrosome. Its subcellular location is the secreted. The protein localises to the extracellular exosome. It is found in the cell junction. The protein resides in the tight junction. It localises to the midbody. Its subcellular location is the midbody ring. In terms of biological role, multifunctional protein involved in endocytosis, multivesicular body biogenesis, membrane repair, cytokinesis, apoptosis and maintenance of tight junction integrity. Class E VPS protein involved in concentration and sorting of cargo proteins of the multivesicular body (MVB) for incorporation into intralumenal vesicles (ILVs) that are generated by invagination and scission from the limiting membrane of the endosome. Binds to the phospholipid lysobisphosphatidic acid (LBPA) which is abundant in MVBs internal membranes. The MVB pathway requires the sequential function of ESCRT-O, -I,-II and -III complexes. The ESCRT machinery also functions in topologically equivalent membrane fission events, such as the terminal stages of cytokinesis. Adapter for a subset of ESCRT-III proteins, such as CHMP4, to function at distinct membranes. Required for completion of cytokinesis. May play a role in the regulation of both apoptosis and cell proliferation. Regulates exosome biogenesis in concert with SDC1/4 and SDCBP. By interacting with F-actin, PARD3 and TJP1 secures the proper assembly and positioning of actomyosin-tight junction complex at the apical sides of adjacent epithelial cells that defines a spatial membrane domain essential for the maintenance of epithelial cell polarity and barrier. The chain is Programmed cell death 6-interacting protein from Rattus norvegicus (Rat).